Here is a 917-residue protein sequence, read N- to C-terminus: Glutamate receptor (917 aa).

The first 19 residues, 1-19 (MDTCVFPLVVLWISMRITS), serve as a signal peptide directing secretion. The Extracellular portion of the chain corresponds to 20 to 556 (TLDEVPIGGI…HFFSFMEPLS (537 aa)). Asn62, Asn95, Asn121, Asn125, Asn229, Asn251, Asn261, Asn272, Asn418, Asn419, Asn424, and Asn491 each carry an N-linked (GlcNAc...) asparagine glycan. Residues 557–577 (SEIWMCIVFAYIGVSVVLFLV) traverse the membrane as a helical segment. Residues 578 to 631 (SRFSPNEWHLSEAHHSYIANDFSISNSLWFSLGAFMQQGCDISPRSMSGRIVGS) lie on the Cytoplasmic side of the membrane. The chain crosses the membrane as a helical span at residues 632-652 (VWWFFTLIIISSYTANLAAFL). Over 653–818 (TVERMLTPID…GAQSALTLAN (166 aa)) the chain is Extracellular. N-linked (GlcNAc...) asparagine glycosylation occurs at Asn775. Residues 819–839 (VAGIFYILIGGLVVAVLSAAF) traverse the membrane as a helical segment. Over 840 to 917 (EFLYKSRMDS…FEDSNTHTEV (78 aa)) the chain is Cytoplasmic. Positions 871-896 (HIDSEQKTTGNGTRRRSHNSVTYTYT) are disordered.

It belongs to the glutamate-gated ion channel (TC 1.A.10.1) family.

The protein localises to the cell membrane. The protein resides in the postsynaptic cell membrane. In terms of biological role, receptor for glutamate. L-glutamate acts as an excitatory neurotransmitter at many synapses in the central nervous system. The postsynaptic actions of Glu are mediated by a variety of receptors. In Lymnaea stagnalis (Great pond snail), this protein is Glutamate receptor.